We begin with the raw amino-acid sequence, 216 residues long: Transmembrane emp24 domain-containing protein eca (216 aa).

The N-terminal stretch at 1-20 (MRDQFICLALLLCALHSACG) is a signal peptide. At 21 to 182 (LYFHISETER…FRHTSESTNS (162 aa)) the chain is on the lumenal side. In terms of domain architecture, GOLD spans 30 to 126 (RKCFIEEVPD…QLRVHLDIQV (97 aa)). A coiled-coil region spans residues 134-164 (ANVAQKEKLTELQLRIRQLLDQVEQITKEQN). Residues 183-203 (RVLWWSLAQTLVLVCMGFWQM) form a helical membrane-spanning segment. The Cytoplasmic segment spans residues 204–216 (RHLKSFFEAKKLV). The short motif at 213–216 (KKLV) is the Prevents secretion from ER element.

It belongs to the EMP24/GP25L family.

The protein resides in the endoplasmic reticulum membrane. Its function is as follows. Eca and bai are essential, though not redundant, for dorsoventral patterning of the embryo. Specifically required during early embryogenesis for the activity of maternal tkv, while the zygotic tkv is not affected. Involved in Golgi organization. The sequence is that of Transmembrane emp24 domain-containing protein eca from Drosophila pseudoobscura pseudoobscura (Fruit fly).